A 125-amino-acid polypeptide reads, in one-letter code: Large ribosomal subunit protein bL17 (125 aa).

It belongs to the bacterial ribosomal protein bL17 family. In terms of assembly, part of the 50S ribosomal subunit. Contacts protein L32.

The protein is Large ribosomal subunit protein bL17 of Syntrophus aciditrophicus (strain SB).